The sequence spans 185 residues: ATP synthase subunit b 2 (185 aa).

The interval 1–23 (MAEGHGDAKGATAHTAADGGHKA) is disordered. The span at 9 to 18 (KGATAHTAAD) shows a compositional bias: low complexity. Residues 32–51 (TFASQLVSLTIAFVALYLIV) traverse the membrane as a helical segment.

It belongs to the ATPase B chain family. As to quaternary structure, F-type ATPases have 2 components, F(1) - the catalytic core - and F(0) - the membrane proton channel. F(1) has five subunits: alpha(3), beta(3), gamma(1), delta(1), epsilon(1). F(0) has three main subunits: a(1), b(2) and c(10-14). The alpha and beta chains form an alternating ring which encloses part of the gamma chain. F(1) is attached to F(0) by a central stalk formed by the gamma and epsilon chains, while a peripheral stalk is formed by the delta and b chains.

It localises to the cell inner membrane. F(1)F(0) ATP synthase produces ATP from ADP in the presence of a proton or sodium gradient. F-type ATPases consist of two structural domains, F(1) containing the extramembraneous catalytic core and F(0) containing the membrane proton channel, linked together by a central stalk and a peripheral stalk. During catalysis, ATP synthesis in the catalytic domain of F(1) is coupled via a rotary mechanism of the central stalk subunits to proton translocation. Functionally, component of the F(0) channel, it forms part of the peripheral stalk, linking F(1) to F(0). The b'-subunit is a diverged and duplicated form of b found in plants and photosynthetic bacteria. In Rhodopseudomonas palustris (strain HaA2), this protein is ATP synthase subunit b 2 (atpF2).